Consider the following 455-residue polypeptide: Fez family zinc finger protein 2 (455 aa).

The segment at 1–22 (MASSASLETMVPPACPRAGASP) is disordered. The short motif at 27-42 (TLAFSIERIMAKTSEP) is the Engrailed homology 1 repressor element. 6 C2H2-type zinc fingers span residues 272-294 (FTCE…MPVH), 300-322 (FVCK…KIIH), 328-350 (HKCN…IRIH), 356-378 (FVCE…KLTH), 384-406 (YKCT…MHTH), and 412-435 (FTCA…RKLH).

It belongs to the krueppel C2H2-type zinc-finger protein family. As to expression, highly expressed in neocortical layer V, moderately expressed in layer VI. Expressed in subcortically projecting neurons.

It is found in the nucleus. Functionally, transcription repressor. Required for the specification of corticospinal motor neurons and other subcerebral projection neurons. May play a role in layer and neuronal subtype-specific patterning of subcortical projections and axonal fasciculation. Controls the development of dendritic arborization and spines of large layer V pyramidal neurons. Plays a role in rostro-caudal patterning of the diencephalon and in prethalamic formation. The sequence is that of Fez family zinc finger protein 2 (Fezf2) from Mus musculus (Mouse).